A 598-amino-acid chain; its full sequence is Arylsulfate sulfotransferase AssT (598 aa).

Positions 1-27 (MFHPYRKTLLSGTVALALGLFATGAIA) are cleaved as a signal peptide. 4-methylumbelliferone contacts are provided by His-279 and His-383. Cys-445 and Cys-451 are joined by a disulfide. Position 463 (His-463) interacts with 4-methylumbelliferone. The active-site Nucleophile; sulfurylated histidine covalent intermediate is the His-463.

Belongs to the aryl sulfotransferase family. Monomer.

The protein localises to the periplasm. It catalyses the reaction an aryl sulfate + a phenol = an aryl sulfate + a phenol. The enzyme catalyses 4-methylumbelliferone sulfate + phenol = phenyl sulfate + 4-methylumbelliferone. The catalysed reaction is 2-naphthyl sulfate + phenol = phenyl sulfate + 2-naphthol. In terms of biological role, catalyzes the transfer of a sulfate group from a phenyl sulfate ester to other phenolic compounds. Is able to use several substrate donors and acceptors in vitro: using phenol as an acceptor substrate, 4-methylumbelliferyl sulfate is the best donor substrate, followed by beta-naphthyl sulfate, p-nitrophenyl sulfate (PNS), and alpha-naphthyl sulfate; using PNS as a donor substrate, alpha-naphthol is the best acceptor substrate, followed by phenol, resorcinol, p-acetaminophen, tyramine, and tyrosine. Cannot use 3'-phosphoadenosine-5'-phophosulfate (PAPS), the donor substrate of mammalian sulfotransferase. May be a detoxifying enzyme, converting toxic phenolic compounds into non-toxic materials. The protein is Arylsulfate sulfotransferase AssT of Lelliottia amnigena (Enterobacter amnigenus).